The following is a 937-amino-acid chain: Beta-mannosidase A (937 aa).

A signal peptide spans 1 to 23; it reads MRALPTTATTLLGVLFFPSASRS. N-linked (GlcNAc...) asparagine glycans are attached at residues N42, N82, N250, N285, N319, N329, and N350. E482 serves as the catalytic Proton donor. Residues N553, N612, N743, and N796 are each glycosylated (N-linked (GlcNAc...) asparagine).

The protein belongs to the glycosyl hydrolase 2 family. Beta-mannosidase A subfamily. Homodimer. N-glycosylated.

It localises to the secreted. It carries out the reaction Hydrolysis of terminal, non-reducing beta-D-mannose residues in beta-D-mannosides.. The protein operates within glycan metabolism; N-glycan degradation. In terms of biological role, exoglycosidase that cleaves the single beta-linked mannose residue from the non-reducing end of beta-mannosidic oligosaccharides of various complexity and length. Involved in the degradation of polymeric mannan and galactomannan. Releases the terminal mannose residue from mannotriose and is somewaht less active on other mannooligosaccharides. This Aspergillus aculeatus protein is Beta-mannosidase A (mndA).